The chain runs to 92 residues: Large ribosomal subunit protein bL28 (92 aa).

The protein belongs to the bacterial ribosomal protein bL28 family.

In Borrelia hermsii (strain HS1 / DAH), this protein is Large ribosomal subunit protein bL28.